The chain runs to 724 residues: Long-chain-fatty-acid--CoA ligase ACSBG1 (724 aa).

The segment at Met-1–Gln-30 is disordered. Basic and acidic residues predominate over residues Asp-20–Gln-30. Phosphoserine occurs at positions 53 and 56. ATP is bound by residues Thr-282–Lys-290, Ala-472–Ser-477, Asp-550, and Arg-565. Tyr-658 is modified (phosphotyrosine). ATP is bound at residue Lys-701.

The protein belongs to the ATP-dependent AMP-binding enzyme family. Bubblegum subfamily. In terms of tissue distribution, expressed primarily in brain. Expressed at lower level in testis and adrenal gland. Present in all regions of brain except pituitary.

The protein resides in the cytoplasm. It is found in the cytoplasmic vesicle. It localises to the microsome. Its subcellular location is the endoplasmic reticulum. The protein localises to the cell membrane. It catalyses the reaction a long-chain fatty acid + ATP + CoA = a long-chain fatty acyl-CoA + AMP + diphosphate. The catalysed reaction is (E)-hexadec-2-enoate + ATP + CoA = (2E)-hexadecenoyl-CoA + AMP + diphosphate. The enzyme catalyses hexadecanoate + ATP + CoA = hexadecanoyl-CoA + AMP + diphosphate. Functionally, catalyzes the conversion of fatty acids such as long-chain and very long-chain fatty acids to their active form acyl-CoAs for both synthesis of cellular lipids, and degradation via beta-oxidation. Can activate diverse saturated, monosaturated and polyunsaturated fatty acids. This Homo sapiens (Human) protein is Long-chain-fatty-acid--CoA ligase ACSBG1.